Reading from the N-terminus, the 59-residue chain is Large ribosomal subunit protein bL32 (59 aa).

Belongs to the bacterial ribosomal protein bL32 family.

The protein is Large ribosomal subunit protein bL32 of Limosilactobacillus reuteri (strain DSM 20016) (Lactobacillus reuteri).